A 311-amino-acid polypeptide reads, in one-letter code: Fucose-specific lectin (311 aa).

Tandem repeats lie at residues 1–53 (MSTP…KNVI), 54–103 (AKAK…AGAK), 104–151 (FTVA…EGTN), 152–209 (LGVA…FDKA), 210–256 (PPRC…DKRT), and 257–311 (ITPV…PPAE). The tract at residues 1–311 (MSTPGAQEVL…LGRRALPPAE (311 aa)) is 6 X approximate tandem repeats. Residues R25, E37, W44, R73, E85, W94, R126, E138, W146, R177, Q189, W198, R230, Q242, R277, and E291 each coordinate beta-L-fucose.

It belongs to the fungal fucose-specific lectin family. Homodimer.

In terms of biological role, lectin that specifically binds to L-fucose and weakly reacts with mannose and N-acetyl-neuraminic acid. Has strongest preference for the alpha-1,6-fucosylated chain (core fucose) on glycoproteins among alpha-1,2-, alpha-1,3-, alpha-1,4-, and alpha-1,6-fucosylated chains. Binds to fucose residues of IgE in mice and human, causing antigen-independent IgE-mediated mast cell activation and anaphylactoid reactions in mice and is possibly implicated in allergic response to Aspergillus oryzae in humans. Induces secretion of pro-inflammatory cytokines IL6 and IL8 implicated in ocular diseases such as mycotic keratitis, probably through its interaction with host toll-like receptors TLR2 and TLR4, followed by up-regulation of pro-inflammatory cytokines. This is Fucose-specific lectin from Aspergillus oryzae (strain ATCC 42149 / RIB 40) (Yellow koji mold).